A 416-amino-acid polypeptide reads, in one-letter code: Kelch repeat-containing protein At1g19460 (416 aa).

Residues 1 to 11 show a composition bias toward polar residues; the sequence is MANISEISGDS. Residues 1–55 are disordered; sequence MANISEISGDSNDGGDPNKKPEEQVLRRSRRIATRNENQNKKPKEEEEKDNRSVS. 2 stretches are compositionally biased toward basic and acidic residues: residues 16–26 and 38–52; these read DPNKKPEEQVL and NQNK…KDNR. 4 Kelch repeats span residues 156 to 202, 203 to 250, 255 to 293, and 294 to 344; these read EMYV…VFDG, KIYV…FAHA, KLYI…PCTM, and QCVI…SDGS.

This chain is Kelch repeat-containing protein At1g19460, found in Arabidopsis thaliana (Mouse-ear cress).